Here is a 304-residue protein sequence, read N- to C-terminus: tRNA pseudouridine synthase B (304 aa).

The active-site Nucleophile is Asp48.

The protein belongs to the pseudouridine synthase TruB family. Type 1 subfamily.

The catalysed reaction is uridine(55) in tRNA = pseudouridine(55) in tRNA. Responsible for synthesis of pseudouridine from uracil-55 in the psi GC loop of transfer RNAs. The sequence is that of tRNA pseudouridine synthase B from Pseudomonas paraeruginosa (strain DSM 24068 / PA7) (Pseudomonas aeruginosa (strain PA7)).